The following is a 224-amino-acid chain: Glutathione S-transferase U1 (224 aa).

The GST N-terminal domain maps to 6–85; the sequence is ESVKLLGFWA…YIDQTWKNSP (80 aa). Glutathione is bound by residues 16–17, 42–43, 56–57, and 69–70; these read SP, NK, KV, and ES. Residues 90–217 form the GST C-terminal domain; sequence DPYEKAMARF…EKQIERMTKI (128 aa). T151 is subject to Phosphothreonine.

Belongs to the GST superfamily. Tau family.

It localises to the cytoplasm. Its subcellular location is the cytosol. The catalysed reaction is RX + glutathione = an S-substituted glutathione + a halide anion + H(+). May be involved in the conjugation of reduced glutathione to a wide number of exogenous and endogenous hydrophobic electrophiles and have a detoxification role against certain herbicides. This Arabidopsis thaliana (Mouse-ear cress) protein is Glutathione S-transferase U1 (GSTU1).